Reading from the N-terminus, the 244-residue chain is Probable Ni/Fe-hydrogenase B-type cytochrome subunit (244 aa).

4 helical membrane-spanning segments follow: residues 39–59 (LWHWVNALAIVVLAVTGFFIG), 73–93 (FLMGYIRFAHFVAAYIFAIGM), 150–171 (FAMFFIFFLSSVFMILTGFAMY), and 204–221 (LGMWFIVVFVIVHVYAAI).

This sequence belongs to the HupC/HyaC/HydC family.

The protein localises to the cell membrane. Probable b-type cytochrome. This is Probable Ni/Fe-hydrogenase B-type cytochrome subunit (hoxZ) from Cupriavidus necator (strain ATCC 17699 / DSM 428 / KCTC 22496 / NCIMB 10442 / H16 / Stanier 337) (Ralstonia eutropha).